A 481-amino-acid chain; its full sequence is Palmitoyltransferase PFA4 (481 aa).

The segment at 1 to 22 is disordered; the sequence is MTNQDPDDGAYPSSQSDDDGIE. At 1–66 the chain is on the cytoplasmic side; sequence MTNQDPDDGA…APLTGRRRTP (66 aa). A helical transmembrane segment spans residues 67–87; that stretch reads LSWTEVIWVSLTLLLIAVLGY. The Lumenal portion of the chain corresponds to 88 to 108; sequence SSQLYVMLPYYEKTPSFSPQA. A helical transmembrane segment spans residues 109–129; it reads LAAVLVPFNLGLLAIYYNYWL. Residues 130–223 are Cytoplasmic-facing; sequence CVTTDAGSVP…LANCVGHFNH (94 aa). The region spanning 181–231 is the DHHC domain; it reads RYCKTCSAFKPPRSHHCKTCQRCVLRMDHHCPWLANCVGHFNHAHFIRFLF. Cysteine 211 acts as the S-palmitoyl cysteine intermediate in catalysis. The helical transmembrane segment at 224 to 244 threads the bilayer; the sequence is AHFIRFLFYVDVTCLYHLIMI. Over 245–265 the chain is Lumenal; that stretch reads SCRVLDSFNSYTYWREPCARE. The helical transmembrane segment at 266–286 threads the bilayer; sequence LVWLVVNYALCIPVILLVGIF. Over 287–481 the chain is Cytoplasmic; that stretch reads SLYHFYCLAV…EVRPHTPWSV (195 aa). Residues 370 to 481 form a disordered region; it reads SQYRWPPKDP…EVRPHTPWSV (112 aa). Residues 418 to 431 show a composition bias toward low complexity; that stretch reads SSPSSSDSHSSLHL. 2 stretches are compositionally biased toward basic and acidic residues: residues 441–452 and 466–475; these read LPHHFDPPHDPD and RGSEGYEVRP.

It belongs to the DHHC palmitoyltransferase family. PFA4 subfamily.

Its subcellular location is the endoplasmic reticulum membrane. The catalysed reaction is L-cysteinyl-[protein] + hexadecanoyl-CoA = S-hexadecanoyl-L-cysteinyl-[protein] + CoA. In terms of biological role, mediates the reversible addition of palmitate to target proteins, thereby regulating their membrane association and biological function. The protein is Palmitoyltransferase PFA4 of Mycosarcoma maydis (Corn smut fungus).